Reading from the N-terminus, the 498-residue chain is AP2-like ethylene-responsive transcription factor AIL7 (498 aa).

Positions 186–195 are enriched in polar residues; the sequence is TSDQPLSCNN. The interval 186–220 is disordered; that stretch reads TSDQPLSCNNGERGGNSNKKKTVSKKETSDDSKKK. Residues 209 to 220 show a composition bias toward basic and acidic residues; sequence SKKETSDDSKKK. DNA-binding regions (AP2/ERF) lie at residues 231–297 and 333–391; these read IYRG…TNFP and IYRG…TNFE. Positions 422 to 451 are enriched in low complexity; it reads ESPSSSSSDHNLQQQQLLPSSSPSDQNPNS. Positions 422-452 are disordered; that stretch reads ESPSSSSSDHNLQQQQLLPSSSPSDQNPNSI.

The protein belongs to the AP2/ERF transcription factor family. AP2 subfamily. As to quaternary structure, interacts with HDG2, and possibly with HDG3, HDG7, ANL2, ATML1 and PDF2. Expressed in roots, seedlings, inflorescence, and siliques. Also detected at low levels in leaves.

It localises to the nucleus. Functionally, probably acts as a transcriptional activator. Binds to the GCC-box pathogenesis-related promoter element. May be involved in the regulation of gene expression by stress factors and by components of stress signal transduction pathways. This is AP2-like ethylene-responsive transcription factor AIL7 from Arabidopsis thaliana (Mouse-ear cress).